The chain runs to 158 residues: 3-hydroxyacyl-[acyl-carrier-protein] dehydratase FabZ (158 aa).

The active site involves His-61.

This sequence belongs to the thioester dehydratase family. FabZ subfamily.

The protein resides in the cytoplasm. It carries out the reaction a (3R)-hydroxyacyl-[ACP] = a (2E)-enoyl-[ACP] + H2O. Functionally, involved in unsaturated fatty acids biosynthesis. Catalyzes the dehydration of short chain beta-hydroxyacyl-ACPs and long chain saturated and unsaturated beta-hydroxyacyl-ACPs. In Methylobacterium radiotolerans (strain ATCC 27329 / DSM 1819 / JCM 2831 / NBRC 15690 / NCIMB 10815 / 0-1), this protein is 3-hydroxyacyl-[acyl-carrier-protein] dehydratase FabZ.